A 353-amino-acid chain; its full sequence is tRNA-specific 2-thiouridylase MnmA 1 (353 aa).

ATP is bound by residues 9-16 (AMSGGVDS) and M35. The active-site Nucleophile is the C98. A disulfide bond links C98 and C194. Position 122 (G122) interacts with ATP. The segment at 144–146 (KDQ) is interaction with tRNA. C194 (cysteine persulfide intermediate) is an active-site residue. The tract at residues 300–301 (RY) is interaction with tRNA.

This sequence belongs to the MnmA/TRMU family.

It localises to the cytoplasm. The enzyme catalyses S-sulfanyl-L-cysteinyl-[protein] + uridine(34) in tRNA + AH2 + ATP = 2-thiouridine(34) in tRNA + L-cysteinyl-[protein] + A + AMP + diphosphate + H(+). In terms of biological role, catalyzes the 2-thiolation of uridine at the wobble position (U34) of tRNA, leading to the formation of s(2)U34. This chain is tRNA-specific 2-thiouridylase MnmA 1, found in Clostridium botulinum (strain Okra / Type B1).